A 526-amino-acid chain; its full sequence is Histone-lysine N-methyltransferase SET5 (526 aa).

The SET domain maps to Ala-112–Val-403. The segment at Asn-450–Lys-492 is disordered. Basic and acidic residues predominate over residues Ser-476–Lys-492. Ser-517 carries the phosphoserine modification.

It belongs to the class V-like SAM-binding methyltransferase superfamily. Histone-lysine methyltransferase family. SET5 subfamily.

The protein resides in the nucleus. Its subcellular location is the chromosome. The protein localises to the cytoplasm. It catalyses the reaction L-lysyl-[histone] + S-adenosyl-L-methionine = N(6)-methyl-L-lysyl-[histone] + S-adenosyl-L-homocysteine + H(+). Histone methyltransferase that monomethylates 'Lys-5', 'Lys-8' and 'Lys-12' of histone H4 (H4K5me1, H4K8me1 and H4K12me1, respectively), thereby controlling gene expression and remodeling chromatin structures. This Saccharomyces cerevisiae (strain YJM789) (Baker's yeast) protein is Histone-lysine N-methyltransferase SET5 (SET5).